A 64-amino-acid chain; its full sequence is Long neurotoxin MS4 (64 aa).

Cystine bridges form between Cys-3/Cys-24, Cys-6/Cys-11, Cys-17/Cys-41, Cys-45/Cys-57, and Cys-58/Cys-63.

Belongs to the three-finger toxin family. Ancestral subfamily. As to expression, expressed by the venom gland.

The protein localises to the secreted. In terms of biological role, produces peripheral paralysis by blocking neuromuscular transmission at the postsynaptic site. Weak inhibitor of the endogenous nicotinic acetylcholine receptors (nAChR) in the human rhabdomyosarcoma TE 671 cell line with an IC(50) of 690 mM. This neurotoxin is lethal to zebrafish by injection at the back of the dorsolateral region, but is not toxic to mice by intraperitoneal injection. The polypeptide is Long neurotoxin MS4 (Micrurus surinamensis (Surinam coral snake)).